The chain runs to 587 residues: Potassium-transporting ATPase potassium-binding subunit (587 aa).

4 helical membrane-spanning segments follow: residues 1 to 21 (MSTS…LWVT), 60 to 80 (PVYA…LYLL), 89 to 109 (LNLG…VSFM), and 131 to 151 (GLAV…IAVV). Residues 162 to 188 (AVGGPGGPNGPGGPGGPNGPGAGSRDD) are disordered. Residues 164-183 (GGPGGPNGPGGPGGPNGPGA) show a composition bias toward gly residues. A run of 7 helical transmembrane segments spans residues 208-228 (IRIL…GGAI), 280-300 (PTSW…FSLP), 314-334 (LAIV…NAAF), 409-429 (GLYG…LMIG), 449-469 (LYFL…MGLP), 514-534 (ALGL…LGMA), and 557-577 (FAGM…FPAL).

Belongs to the KdpA family. In terms of assembly, the system is composed of three essential subunits: KdpA, KdpB and KdpC.

It is found in the cell membrane. Part of the high-affinity ATP-driven potassium transport (or Kdp) system, which catalyzes the hydrolysis of ATP coupled with the electrogenic transport of potassium into the cytoplasm. This subunit binds the extracellular potassium ions and delivers the ions to the membrane domain of KdpB through an intramembrane tunnel. The protein is Potassium-transporting ATPase potassium-binding subunit of Frankia alni (strain DSM 45986 / CECT 9034 / ACN14a).